A 100-amino-acid polypeptide reads, in one-letter code: Urease subunit gamma (100 aa).

The protein belongs to the urease gamma subunit family. Heterotrimer of UreA (gamma), UreB (beta) and UreC (alpha) subunits. Three heterotrimers associate to form the active enzyme.

It localises to the cytoplasm. It catalyses the reaction urea + 2 H2O + H(+) = hydrogencarbonate + 2 NH4(+). It participates in nitrogen metabolism; urea degradation; CO(2) and NH(3) from urea (urease route): step 1/1. The protein is Urease subunit gamma of Cupriavidus taiwanensis (strain DSM 17343 / BCRC 17206 / CCUG 44338 / CIP 107171 / LMG 19424 / R1) (Ralstonia taiwanensis (strain LMG 19424)).